The sequence spans 406 residues: Mitochondrial potassium channel (406 aa).

The transit peptide at 1-35 (MTGCSPVFAMQHVVGVPRILVRRTFLGTDVTMTRT) directs the protein to the mitochondrion. The Mitochondrial matrix portion of the chain corresponds to 36–198 (LCSPGPREKR…KERTRAERTK (163 aa)). Residues 113 to 140 (VREAREGLEAQQTKLKEVRDRLDRVSRE) are a coiled coil. A helical transmembrane segment spans residues 199–219 (NWSLIGSVLGALIGVAGSTYV). Residues 220-382 (NRVRLQELKA…LEAQANRNTV (163 aa)) lie on the Mitochondrial intermembrane side of the membrane. Residues 383-403 (SSTLVTCVTFLATLPLLYMLF) traverse the membrane as a helical segment. Residues 404 to 406 (KTS) lie on the Mitochondrial matrix side of the membrane.

As to quaternary structure, the mitochondrial potassium channel (mitoK(ATP)) is composed of 4 subunits of CCDC51/MITOK and 4 subunits of ABCB8/MITOSUR.

Its subcellular location is the mitochondrion inner membrane. The catalysed reaction is K(+)(in) = K(+)(out). With respect to regulation, inhibited by ATP via mitoK(ATP) channel. Functionally, pore-forming subunit of the mitochondrial ATP-gated potassium channel (mitoK(ATP)). Together with ATP-binding subunit ABCB8/MITOSUR of the mitoK(ATP) channel, mediates ATP-dependent K(+) currents across the mitochondrial inner membrane. An increase in ATP intracellular levels closes the channel, inhibiting K(+) transport, whereas a decrease in ATP levels enhances K(+) uptake in the mitochondrial matrix. May contribute to the homeostatic control of cellular metabolism under stress conditions by regulating the mitochondrial matrix volume. The polypeptide is Mitochondrial potassium channel (Mus musculus (Mouse)).